The chain runs to 497 residues: L-arabinose isomerase (497 aa).

E306, E331, H348, and H447 together coordinate Mn(2+).

It belongs to the arabinose isomerase family. Mn(2+) serves as cofactor.

The catalysed reaction is beta-L-arabinopyranose = L-ribulose. The protein operates within carbohydrate degradation; L-arabinose degradation via L-ribulose; D-xylulose 5-phosphate from L-arabinose (bacterial route): step 1/3. In terms of biological role, catalyzes the conversion of L-arabinose to L-ribulose. This is L-arabinose isomerase from Halalkalibacterium halodurans (strain ATCC BAA-125 / DSM 18197 / FERM 7344 / JCM 9153 / C-125) (Bacillus halodurans).